A 304-amino-acid chain; its full sequence is Xylanase inhibitor protein 1 (304 aa).

The N-terminal stretch at 1–29 (MVALGRRSWLVPLAMVLAVSSCLAGPAMA) is a signal peptide. The region spanning 34-304 (GQMTVFWGRN…GYGKTVKYWA (271 aa)) is the GH18 domain. Disulfide bonds link cysteine 53-cysteine 93 and cysteine 190-cysteine 219.

The protein belongs to the glycosyl hydrolase 18 family. Xylanase inhibitor subfamily. In terms of assembly, binds to fungal GH11 xylanases. Constitutively expressed in shoots.

The protein localises to the secreted. Functionally, fungal xylanase inhibitor. Possesses competitive inhibiting activity against fungal endo-1,4-beta-D-xylanases belonging to glycoside hydrolase family 11 (GH11). May function in plant defense against secreted fungal pathogen xylanases. Is similar to class III chitinases, but does not exhibit chitinase activity. This Oryza sativa subsp. japonica (Rice) protein is Xylanase inhibitor protein 1.